Reading from the N-terminus, the 379-residue chain is Alcohol dehydrogenase 2 (379 aa).

Zn(2+) contacts are provided by Cys47, Thr49, His69, Cys99, Cys102, Cys105, Cys113, and Cys177. 2 residues coordinate an alcohol: Thr49 and His69. Thr49 serves as a coordination point for NAD(+). NAD(+)-binding positions include 202–207 (GLGAVG), Asp226, Lys231, Thr272, Val295, 295–297 (VGV), Phe322, and Arg372.

Belongs to the zinc-containing alcohol dehydrogenase family. Homodimer. The cofactor is Zn(2+).

The protein resides in the cytoplasm. It catalyses the reaction a primary alcohol + NAD(+) = an aldehyde + NADH + H(+). The enzyme catalyses a secondary alcohol + NAD(+) = a ketone + NADH + H(+). The protein is Alcohol dehydrogenase 2 (ADH2) of Zea mays (Maize).